The sequence spans 167 residues: NAD(P)H-quinone oxidoreductase subunit I, chloroplastic (167 aa).

2 4Fe-4S ferredoxin-type domains span residues 55–84 and 95–124; these read GRIHFEFDKCIACEVCVRVCPINLPVVDWI and KNYSIDFGVCIFCGNCVEYCPTNCLSMTEE. C64, C67, C70, C74, C104, C107, C110, and C114 together coordinate [4Fe-4S] cluster.

It belongs to the complex I 23 kDa subunit family. NDH is composed of at least 16 different subunits, 5 of which are encoded in the nucleus. [4Fe-4S] cluster serves as cofactor.

It is found in the plastid. Its subcellular location is the chloroplast thylakoid membrane. The enzyme catalyses a plastoquinone + NADH + (n+1) H(+)(in) = a plastoquinol + NAD(+) + n H(+)(out). It catalyses the reaction a plastoquinone + NADPH + (n+1) H(+)(in) = a plastoquinol + NADP(+) + n H(+)(out). Its function is as follows. NDH shuttles electrons from NAD(P)H:plastoquinone, via FMN and iron-sulfur (Fe-S) centers, to quinones in the photosynthetic chain and possibly in a chloroplast respiratory chain. The immediate electron acceptor for the enzyme in this species is believed to be plastoquinone. Couples the redox reaction to proton translocation, and thus conserves the redox energy in a proton gradient. This is NAD(P)H-quinone oxidoreductase subunit I, chloroplastic from Adiantum capillus-veneris (Maidenhair fern).